The primary structure comprises 321 residues: Glucokinase (321 aa).

An ATP-binding site is contributed by 8-13 (GDVGGT).

This sequence belongs to the bacterial glucokinase family.

It localises to the cytoplasm. The catalysed reaction is D-glucose + ATP = D-glucose 6-phosphate + ADP + H(+). This chain is Glucokinase, found in Salmonella typhi.